Consider the following 606-residue polypeptide: Probable translation initiation factor IF-2 (606 aa).

One can recognise a tr-type G domain in the interval I11–K230. Residues G20 to T27 form a G1 region. G20–T27 provides a ligand contact to GTP. The tract at residues E45 to H49 is G2. Positions D85 to G88 are G3. GTP contacts are provided by residues D85–H89 and N139–D142. Positions N139 to D142 are G4. Positions S207–K209 are G5.

It belongs to the TRAFAC class translation factor GTPase superfamily. Classic translation factor GTPase family. IF-2 subfamily.

Functionally, function in general translation initiation by promoting the binding of the formylmethionine-tRNA to ribosomes. Seems to function along with eIF-2. The sequence is that of Probable translation initiation factor IF-2 from Staphylothermus marinus (strain ATCC 43588 / DSM 3639 / JCM 9404 / F1).